A 225-amino-acid polypeptide reads, in one-letter code: Protein-L-isoaspartate O-methyltransferase 2 (225 aa).

The active site involves Ser73.

This sequence belongs to the methyltransferase superfamily. L-isoaspartyl/D-aspartyl protein methyltransferase family.

The protein resides in the cytoplasm. The enzyme catalyses [protein]-L-isoaspartate + S-adenosyl-L-methionine = [protein]-L-isoaspartate alpha-methyl ester + S-adenosyl-L-homocysteine. Functionally, catalyzes the methyl esterification of L-isoaspartyl residues in peptides and proteins that result from spontaneous decomposition of normal L-aspartyl and L-asparaginyl residues. It plays a role in the repair and/or degradation of damaged proteins. The protein is Protein-L-isoaspartate O-methyltransferase 2 of Pelobacter propionicus (strain DSM 2379 / NBRC 103807 / OttBd1).